The primary structure comprises 164 residues: Ribosome maturation factor RimM (164 aa).

The region spanning 90–161 is the PRC barrel domain; that stretch reads KGSYFIADLI…TVTIKPLEIW (72 aa).

Belongs to the RimM family. As to quaternary structure, binds ribosomal protein uS19.

The protein resides in the cytoplasm. An accessory protein needed during the final step in the assembly of 30S ribosomal subunit, possibly for assembly of the head region. Essential for efficient processing of 16S rRNA. May be needed both before and after RbfA during the maturation of 16S rRNA. It has affinity for free ribosomal 30S subunits but not for 70S ribosomes. The protein is Ribosome maturation factor RimM of Clostridium botulinum (strain Langeland / NCTC 10281 / Type F).